The primary structure comprises 335 residues: Methionine import ATP-binding protein MetN 1 (335 aa).

An ABC transporter domain is found at 2–242 (IEFHNVHKTY…PQHPTTRRFV (241 aa)). ATP is bound at residue 38–45 (GHSGAGKS).

Belongs to the ABC transporter superfamily. Methionine importer (TC 3.A.1.24) family. As to quaternary structure, the complex is composed of two ATP-binding proteins (MetN), two transmembrane proteins (MetI) and a solute-binding protein (MetQ).

Its subcellular location is the cell inner membrane. The catalysed reaction is L-methionine(out) + ATP + H2O = L-methionine(in) + ADP + phosphate + H(+). It carries out the reaction D-methionine(out) + ATP + H2O = D-methionine(in) + ADP + phosphate + H(+). In terms of biological role, part of the ABC transporter complex MetNIQ involved in methionine import. Responsible for energy coupling to the transport system. The polypeptide is Methionine import ATP-binding protein MetN 1 (Pseudomonas savastanoi pv. phaseolicola (strain 1448A / Race 6) (Pseudomonas syringae pv. phaseolicola (strain 1448A / Race 6))).